The chain runs to 229 residues: Prolactin (229 aa).

An N-terminal signal peptide occupies residues 1–30; sequence MDSKGSSQKGSRLLLLLVVSNLLLCQGVVS. A disulfide bridge links cysteine 34 with cysteine 41. A phosphoserine mark is found at serine 56, serine 64, and serine 120. 2 disulfides stabilise this stretch: cysteine 88–cysteine 204 and cysteine 221–cysteine 229.

The protein belongs to the somatotropin/prolactin family. Interacts with PRLR.

The protein resides in the secreted. Prolactin acts primarily on the mammary gland by promoting lactation. The protein is Prolactin (PRL) of Bos taurus (Bovine).